Reading from the N-terminus, the 239-residue chain is Uridylate kinase (239 aa).

10-13 (KLSG) serves as a coordination point for ATP. UMP is bound at residue Gly-53. The ATP site is built by Gly-54 and Arg-58. UMP is bound by residues Asp-73 and 135–142 (TGRPYFTT). Positions 163, 169, and 172 each coordinate ATP.

Belongs to the UMP kinase family. As to quaternary structure, homohexamer.

It localises to the cytoplasm. The enzyme catalyses UMP + ATP = UDP + ADP. Its pathway is pyrimidine metabolism; CTP biosynthesis via de novo pathway; UDP from UMP (UMPK route): step 1/1. Its activity is regulated as follows. Inhibited by UTP. Its function is as follows. Catalyzes the reversible phosphorylation of UMP to UDP. The protein is Uridylate kinase of Mycoplasmopsis synoviae (strain 53) (Mycoplasma synoviae).